Reading from the N-terminus, the 345-residue chain is uncharacterized protein (345 aa).

Residues 1 to 198 form the CNNM transmembrane domain; sequence MDVLSAVLLA…LSEGLLDHEE (198 aa). The next 2 membrane-spanning stretches (helical) occupy residues 3 to 23 and 95 to 115; these read VLSA…FVGA and VPPA…HVLL. 2 CBS domains span residues 217–280 and 285–342; these read AVPL…PQTV and VVRP…MRDG. A helical membrane pass occupies residues 312–332; sequence LALVTADNGSVVGMVALEDVV.

The protein belongs to the TerC family.

It localises to the cell membrane. This is an uncharacterized protein from Mycobacterium tuberculosis (strain CDC 1551 / Oshkosh).